Reading from the N-terminus, the 285-residue chain is Methylamine utilization protein MauF (285 aa).

7 helical membrane-spanning segments follow: residues 39 to 59 (LGGL…LSQT), 63 to 83 (GVAV…LSTW), 120 to 140 (AVGA…LGFG), 144 to 164 (FGAL…QLGF), 184 to 204 (FPVW…YLTY), 209 to 229 (ILYL…AILL), and 265 to 285 (ALLD…FAAL).

The protein resides in the cell membrane. The protein operates within one-carbon metabolism; methylamine degradation. This is Methylamine utilization protein MauF (mauF) from Methylorubrum extorquens (strain ATCC 14718 / DSM 1338 / JCM 2805 / NCIMB 9133 / AM1) (Methylobacterium extorquens).